A 689-amino-acid chain; its full sequence is Glycine--tRNA ligase beta subunit (689 aa).

Belongs to the class-II aminoacyl-tRNA synthetase family. Tetramer of two alpha and two beta subunits.

It localises to the cytoplasm. The catalysed reaction is tRNA(Gly) + glycine + ATP = glycyl-tRNA(Gly) + AMP + diphosphate. This chain is Glycine--tRNA ligase beta subunit, found in Pectobacterium carotovorum subsp. carotovorum (strain PC1).